Consider the following 355-residue polypeptide: Alanine racemase (355 aa).

The active-site Proton acceptor; specific for D-alanine is K34. At K34 the chain carries N6-(pyridoxal phosphate)lysine. Substrate is bound at residue R133. The Proton acceptor; specific for L-alanine role is filled by Y249. Substrate is bound at residue M297.

It belongs to the alanine racemase family. Pyridoxal 5'-phosphate serves as cofactor.

The catalysed reaction is L-alanine = D-alanine. The protein operates within amino-acid biosynthesis; D-alanine biosynthesis; D-alanine from L-alanine: step 1/1. Catalyzes the interconversion of L-alanine and D-alanine. May also act on other amino acids. This Rickettsia rickettsii (strain Sheila Smith) protein is Alanine racemase (alr).